The chain runs to 64 residues: Prokaryotic ubiquitin-like protein Pup (64 aa).

The segment at 1–37 (MAQEQTKRGGGGGEDDDLSGGAGAGQERREKLAEETD) is disordered. Residues 21 to 58 (GAGAGQERREKLAEETDDLLDEIDDVLEENAEDFVRAY) form an ARC ATPase binding region. The stretch at 24–52 (AGQERREKLAEETDDLLDEIDDVLEENAE) forms a coiled coil. Q64 carries the deamidated glutamine modification. Residue Q64 forms an Isoglutamyl lysine isopeptide (Gln-Lys) (interchain with K-? in acceptor proteins) linkage.

Belongs to the prokaryotic ubiquitin-like protein family. Strongly interacts with the proteasome-associated ATPase ARC through a hydrophobic interface; the interacting region of Pup lies in its C-terminal half. There is one Pup binding site per ARC hexamer ring. Is modified by deamidation of its C-terminal glutamine to glutamate by the deamidase Dop, a prerequisite to the subsequent pupylation process.

The protein operates within protein degradation; proteasomal Pup-dependent pathway. Protein modifier that is covalently attached to lysine residues of substrate proteins, thereby targeting them for proteasomal degradation. The tagging system is termed pupylation. This Mycobacterium sp. (strain JLS) protein is Prokaryotic ubiquitin-like protein Pup.